The chain runs to 201 residues: UPF0098 protein MT1961 (201 aa).

The disordered stretch occupies residues 125–146 (TADGETPGGGISLPNSSGQPAY).

The protein belongs to the UPF0098 family.

In Mycobacterium tuberculosis (strain CDC 1551 / Oshkosh), this protein is UPF0098 protein MT1961.